A 356-amino-acid polypeptide reads, in one-letter code: Nucleotide-binding protein GDI1189/Gdia_1902 (356 aa).

Gly20–Ser27 is a binding site for ATP. Asp65 to Thr68 provides a ligand contact to GTP. Residues Glu285–Ala313 form a disordered region.

It belongs to the RapZ-like family.

Functionally, displays ATPase and GTPase activities. This is Nucleotide-binding protein GDI1189/Gdia_1902 from Gluconacetobacter diazotrophicus (strain ATCC 49037 / DSM 5601 / CCUG 37298 / CIP 103539 / LMG 7603 / PAl5).